The following is a 356-amino-acid chain: MRYAIFDESNLERVLKAIGEASPEFRRFRYVELLAKSEKGVVGKYRSLYFLFSKEPFELDVEPIEIFEVEIEKDDGNFRSFRFGKYSLRDKLLLDCNFNEKLFYDYLPALLCEISSARLLIKDCNLRASHLAERESEIVKEITKISEDVKTLSIEKLEELSFEVSALRASFFSSYMLFKDDVEEIFSSIARASSISNFLGGLLKEQIDELRNQLETISYFESRFEQTLSGVRDALDVVHLRLEMLRGKENLELQKRTSALQAAAAVIEFVAVFYYSMKIWEAFLPVTEMPHWLSFSLLAAFTFTVVVYTEALGDYIRERKPSSKLVLLTLTLAILVILMATLPTLFSAASQLSGGH.

The next 3 helical transmembrane spans lie at 258–275 (SALQAAAAVIEFVAVFYY), 290–312 (PHWLSFSLLAAFTFTVVVYTEAL), and 325–347 (LVLLTLTLAILVILMATLPTLFS).

The protein localises to the cell membrane. This is an uncharacterized protein from Archaeoglobus fulgidus (strain ATCC 49558 / DSM 4304 / JCM 9628 / NBRC 100126 / VC-16).